The primary structure comprises 82 residues: Ice-structuring protein B (82 aa).

Residues 1-23 form the signal peptide; that stretch reads MALSLFTVGQLIFLFWTMRITEA. The propeptide at 24-44 is removed by a dipeptidylpeptidase; sequence RPDPAAKAAPAAAAVPAAAAP. Arg81 carries the arginine amide modification.

It belongs to the type-I AFP family. Post-translationally, amidated. In terms of tissue distribution, detected in liver (at protein level).

The protein localises to the secreted. It is found in the extracellular space. In terms of biological role, contributes to protect fish blood from freezing at subzero sea water temperatures. Lowers the blood freezing point. Binds to nascent ice crystals and prevents further growth. This chain is Ice-structuring protein B, found in Pseudopleuronectes americanus (Winter flounder).